We begin with the raw amino-acid sequence, 321 residues long: Sialic acid-binding periplasmic protein SiaP (321 aa).

The signal sequence occupies residues 1–22 (MKTINKITIAILTLSAAASVNA).

It belongs to the bacterial solute-binding protein 7 family. The complex comprises the extracytoplasmic solute receptor protein SiaP, and the two transmembrane proteins SiaQ and SiaM.

Its subcellular location is the periplasm. In terms of biological role, part of the tripartite ATP-independent periplasmic (TRAP) transport system SiaPQM that catalyzes unidirectional Na(+)-dependent sialic acid uptake. Binds the common sialic acid N-acetylneuraminic acid (Neu5Ac) with a high affinity. The chain is Sialic acid-binding periplasmic protein SiaP from Vibrio cholerae serotype O1 (strain ATCC 39315 / El Tor Inaba N16961).